Here is a 279-residue protein sequence, read N- to C-terminus: Undecaprenyl-diphosphatase (279 aa).

The next 8 helical transmembrane spans lie at 2–22 (LFIE…TEWL), 44–64 (AFME…VIVI), 85–105 (WQLW…AVPL), 113–133 (FNHM…FLWI), 163–183 (VLSI…AIIL), 188–208 (TVAA…YSGL), 225–245 (LLVL…VIKL), and 255–275 (FTVF…YSVF).

Belongs to the UppP family.

It localises to the cell membrane. It carries out the reaction di-trans,octa-cis-undecaprenyl diphosphate + H2O = di-trans,octa-cis-undecaprenyl phosphate + phosphate + H(+). Catalyzes the dephosphorylation of undecaprenyl diphosphate (UPP). Confers resistance to bacitracin. This is Undecaprenyl-diphosphatase from Streptococcus equi subsp. zooepidemicus (strain H70).